The sequence spans 277 residues: Inositol monophosphatase 1 (277 aa).

Residues Glu70, Asp90, Ile92, and Asp93 each coordinate Mg(2+). Substrate is bound by residues Glu70, 90–95, 194–196, Glu213, and Asp220; these read DPIDGT and GTA. Asp220 serves as a coordination point for Mg(2+).

Belongs to the inositol monophosphatase superfamily. Homodimer. Requires Mg(2+) as cofactor. Mostly expressed in brain, small intestine, testis, kidney, and spleen (at protein level).

The protein resides in the cytoplasm. The catalysed reaction is a myo-inositol phosphate + H2O = myo-inositol + phosphate. It carries out the reaction 1D-myo-inositol 1-phosphate + H2O = myo-inositol + phosphate. It catalyses the reaction 1D-myo-inositol 2-phosphate + H2O = myo-inositol + phosphate. The enzyme catalyses 1D-myo-inositol 3-phosphate + H2O = myo-inositol + phosphate. The catalysed reaction is 1D-myo-inositol 4-phosphate + H2O = myo-inositol + phosphate. It carries out the reaction 1D-myo-inositol 5-phosphate + H2O = myo-inositol + phosphate. It catalyses the reaction 1D-myo-inositol 6-phosphate + H2O = myo-inositol + phosphate. The enzyme catalyses scyllo-inositol 1-phosphate + H2O = scyllo-inositol + phosphate. The catalysed reaction is alpha-D-galactose 1-phosphate + H2O = D-galactose + phosphate. It carries out the reaction alpha-D-glucose 1-phosphate + H2O = D-glucose + phosphate. It catalyses the reaction D-glucose 6-phosphate + H2O = D-glucose + phosphate. The enzyme catalyses beta-D-fructose 1-phosphate + H2O = D-fructose + phosphate. The catalysed reaction is glycerol 2-phosphate + H2O = glycerol + phosphate. It carries out the reaction adenosine 2'-phosphate + H2O = adenosine + phosphate. The protein operates within polyol metabolism; myo-inositol biosynthesis; myo-inositol from D-glucose 6-phosphate: step 2/2. Inhibited by Li(+), Ca(2+) and Mn(2+), but also by Mg(2+) at concentrations above 3 mM. In terms of biological role, phosphatase involved in the dephosphorylation of myo-inositol monophosphate to generate myo-inositol. Is also able to dephosphorylate scyllo-inositol-phosphate, myo-inositol 1,4-diphosphate, scyllo-inositol-1,3-diphosphate and scyllo-inositol-1,4-diphosphate. Also dephosphorylates in vitro other sugar-phosphates including D-galactose-1-phosphate, glucose-1-phosphate, glucose-6-phosphate, fructose-1-phosphate, beta-glycerophosphate and 2'-AMP. Responsible for the provision of inositol required for synthesis of phosphatidylinositol and polyphosphoinositides, and involved in maintaining normal brain function. Has been implicated as the pharmacological target for lithium Li(+) action in brain. The protein is Inositol monophosphatase 1 (Impa1) of Mus musculus (Mouse).